The chain runs to 394 residues: Phosphoglycerate kinase (394 aa).

Substrate is bound by residues 21 to 23, arginine 36, 59 to 62, arginine 118, and arginine 151; these read DFN and HLGR. The residue at position 183 (serine 183) is a Phosphoserine. Residue lysine 201 coordinates ATP. Threonine 299 is modified (phosphothreonine). ATP contacts are provided by residues glutamate 323 and 350 to 353; that span reads GGDS.

Belongs to the phosphoglycerate kinase family. Monomer.

It localises to the cytoplasm. The enzyme catalyses (2R)-3-phosphoglycerate + ATP = (2R)-3-phospho-glyceroyl phosphate + ADP. The protein operates within carbohydrate degradation; glycolysis; pyruvate from D-glyceraldehyde 3-phosphate: step 2/5. This Geobacillus kaustophilus (strain HTA426) protein is Phosphoglycerate kinase.